A 186-amino-acid polypeptide reads, in one-letter code: Pyridoxal 5'-phosphate synthase subunit PdxT (186 aa).

An L-glutamine-binding site is contributed by 46-48 (GES). Cys75 serves as the catalytic Nucleophile. L-glutamine is bound by residues Arg101 and 128–129 (IR). Active-site charge relay system residues include His165 and Glu167.

The protein belongs to the glutaminase PdxT/SNO family. In terms of assembly, in the presence of PdxS, forms a dodecamer of heterodimers. Only shows activity in the heterodimer.

It carries out the reaction aldehydo-D-ribose 5-phosphate + D-glyceraldehyde 3-phosphate + L-glutamine = pyridoxal 5'-phosphate + L-glutamate + phosphate + 3 H2O + H(+). It catalyses the reaction L-glutamine + H2O = L-glutamate + NH4(+). It participates in cofactor biosynthesis; pyridoxal 5'-phosphate biosynthesis. Catalyzes the hydrolysis of glutamine to glutamate and ammonia as part of the biosynthesis of pyridoxal 5'-phosphate. The resulting ammonia molecule is channeled to the active site of PdxS. The polypeptide is Pyridoxal 5'-phosphate synthase subunit PdxT (Methanocaldococcus jannaschii (strain ATCC 43067 / DSM 2661 / JAL-1 / JCM 10045 / NBRC 100440) (Methanococcus jannaschii)).